We begin with the raw amino-acid sequence, 477 residues long: ETS translocation variant 1 (477 aa).

S94 is modified (phosphoserine). The disordered stretch occupies residues 128–179; sequence PQVGMRPSNPPTPSSTPVSPLHHASPNTAHTPKPDRAFPAHLPPSQSIPDST. Phosphoserine; by RPS6KA1 and RPS6KA5 is present on residues S191 and S216. K317 is covalently cross-linked (Glycyl lysine isopeptide (Lys-Gly) (interchain with G-Cter in SUMO2)). The ETS DNA-binding region spans 335–415; sequence LQLWQFLVAL…AGERYVYKFV (81 aa).

This sequence belongs to the ETS family. Post-translationally, sumoylated. Phosphorylated at Ser-191 and Ser-216 by RPS6KA1 and RPS6KA5; phosphorylation activates transcriptional activity. Abundant in kidney. Moderate levels seen in the heart, brain, lung, embryo and lower levels seen in spleen, intestine, testis and thymus.

Its subcellular location is the nucleus. In terms of biological role, transcriptional activator that binds to DNA sequences containing the consensus pentanucleotide 5'-CGGA[AT]-3'. Required for olfactory dopaminergic neuron differentiation; may directly activate expression of tyrosine hydroxylase (TH). The chain is ETS translocation variant 1 from Mus musculus (Mouse).